The following is a 348-amino-acid chain: UDP-3-O-acylglucosamine N-acyltransferase (348 aa).

His248 serves as the catalytic Proton acceptor.

This sequence belongs to the transferase hexapeptide repeat family. LpxD subfamily. Homotrimer.

It catalyses the reaction a UDP-3-O-[(3R)-3-hydroxyacyl]-alpha-D-glucosamine + a (3R)-hydroxyacyl-[ACP] = a UDP-2-N,3-O-bis[(3R)-3-hydroxyacyl]-alpha-D-glucosamine + holo-[ACP] + H(+). It participates in bacterial outer membrane biogenesis; LPS lipid A biosynthesis. Functionally, catalyzes the N-acylation of UDP-3-O-acylglucosamine using 3-hydroxyacyl-ACP as the acyl donor. Is involved in the biosynthesis of lipid A, a phosphorylated glycolipid that anchors the lipopolysaccharide to the outer membrane of the cell. This Rippkaea orientalis (strain PCC 8801 / RF-1) (Cyanothece sp. (strain PCC 8801)) protein is UDP-3-O-acylglucosamine N-acyltransferase.